The primary structure comprises 358 residues: Peroxidase 54 (358 aa).

The N-terminal stretch at 1–31 (MAVTSSSSTCDGFFIISLIVIVSSLFGTSSA) is a signal peptide. The residue at position 32 (glutamine 32) is a Pyrrolidone carboxylic acid. N-linked (GlcNAc...) asparagine glycosylation is found at asparagine 34 and asparagine 44. Disulfide bonds link cysteine 42-cysteine 122, cysteine 75-cysteine 80, cysteine 128-cysteine 330, and cysteine 207-cysteine 239. The active-site Proton acceptor is the histidine 73. Residues aspartate 74, valine 77, glycine 79, aspartate 81, and serine 83 each contribute to the Ca(2+) site. Residues asparagine 103, asparagine 161, and asparagine 166 are each glycosylated (N-linked (GlcNAc...) asparagine). Proline 170 contacts substrate. Residue asparagine 178 is glycosylated (N-linked (GlcNAc...) asparagine). Histidine 200 contributes to the heme b binding site. Threonine 201 is a Ca(2+) binding site. N-linked (GlcNAc...) asparagine glycans are attached at residues asparagine 218, asparagine 228, and asparagine 242. 3 residues coordinate Ca(2+): aspartate 252, threonine 255, and aspartate 260. The N-linked (GlcNAc...) asparagine glycan is linked to asparagine 298.

The protein belongs to the peroxidase family. Classical plant (class III) peroxidase subfamily. It depends on heme b as a cofactor. Requires Ca(2+) as cofactor.

It is found in the secreted. The protein resides in the vacuole. The enzyme catalyses 2 a phenolic donor + H2O2 = 2 a phenolic radical donor + 2 H2O. Functionally, removal of H(2)O(2), oxidation of toxic reductants, biosynthesis and degradation of lignin, suberization, auxin catabolism, response to environmental stresses such as wounding, pathogen attack and oxidative stress. These functions might be dependent on each isozyme/isoform in each plant tissue. This Arabidopsis thaliana (Mouse-ear cress) protein is Peroxidase 54 (PER54).